The primary structure comprises 869 residues: Speckle targeted PIP5K1A-regulated poly(A) polymerase (869 aa).

The Matrin-type zinc-finger motif lies at F16–L46. An RRM domain is found at R56 to Q128. The interval H114 to S144 is disordered. S205 serves as a coordination point for ATP. The Mg(2+) site is built by D216 and D218. Residues D216 and D218 each contribute to the UTP site. Disordered regions lie at residues M226–A247 and C259–D335. Polar residues-rich tracts occupy residues D266 to S276 and T283 to D299. Residues Q314–D335 show a composition bias toward basic and acidic residues. N395 contributes to the ATP binding site. N395, R417, Y435, and H552 together coordinate UTP. The PAP-associated domain maps to L494–H552. A KA1; binds the bulging loops of U6 snRNA but is dispensable for terminal uridylyltransferase activity region spans residues S601–K869. Disordered stretches follow at residues Q640–E689, M735–S757, A775–E796, and R803–P822. Residues K671–E689 show a composition bias toward basic and acidic residues. A phosphoserine mark is found at S688 and S744.

Belongs to the DNA polymerase type-B-like family. In terms of assembly, associates with the cleavage and polyadenylation specificity factor (CPSF) complex. Interacts with CPSF1 and CPSF3; the interaction is direct. Interacts with PIP5K1A. Mg(2+) is required as a cofactor. Requires Mn(2+) as cofactor. Phosphorylated by CK1 in the proline-rich (Pro-rich) region.

The protein resides in the nucleus. It localises to the nucleolus. The protein localises to the nucleus speckle. The enzyme catalyses RNA(n) + UTP = RNA(n)-3'-uridine ribonucleotide + diphosphate. The catalysed reaction is RNA(n) + ATP = RNA(n)-3'-adenine ribonucleotide + diphosphate. Its activity is regulated as follows. Adenylyltransferase activity is specifically phosphatidylinositol 4,5-bisphosphate (PtdIns(4,5)P2). Functionally, poly(A) polymerase that creates the 3'-poly(A) tail of specific pre-mRNAs. Localizes to nuclear speckles together with PIP5K1A and mediates polyadenylation of a select set of mRNAs, such as HMOX1. In addition to polyadenylation, it is also required for the 3'-end cleavage of pre-mRNAs: binds to the 3'UTR of targeted pre-mRNAs and promotes the recruitment and assembly of the CPSF complex on the 3'UTR of pre-mRNAs. In addition to adenylyltransferase activity, also has uridylyltransferase activity. However, the ATP ratio is higher than UTP in cells, suggesting that it functions primarily as a poly(A) polymerase. Acts as a specific terminal uridylyltransferase for U6 snRNA in vitro: responsible for a controlled elongation reaction that results in the restoration of the four 3'-terminal UMP-residues found in newly transcribed U6 snRNA. Not involved in replication-dependent histone mRNA degradation. In Mus musculus (Mouse), this protein is Speckle targeted PIP5K1A-regulated poly(A) polymerase (Tut1).